We begin with the raw amino-acid sequence, 156 residues long: 6,7-dimethyl-8-ribityllumazine synthase (156 aa).

5-amino-6-(D-ribitylamino)uracil-binding positions include Phe22, Ala57–Glu59, and Cys81–Ile83. A (2S)-2-hydroxy-3-oxobutyl phosphate-binding site is contributed by Gly86–Thr87. His89 (proton donor) is an active-site residue. 5-amino-6-(D-ribitylamino)uracil is bound at residue Phe114. Arg128 is a binding site for (2S)-2-hydroxy-3-oxobutyl phosphate.

The protein belongs to the DMRL synthase family. Forms an icosahedral capsid composed of 60 subunits, arranged as a dodecamer of pentamers.

It carries out the reaction (2S)-2-hydroxy-3-oxobutyl phosphate + 5-amino-6-(D-ribitylamino)uracil = 6,7-dimethyl-8-(1-D-ribityl)lumazine + phosphate + 2 H2O + H(+). Its pathway is cofactor biosynthesis; riboflavin biosynthesis; riboflavin from 2-hydroxy-3-oxobutyl phosphate and 5-amino-6-(D-ribitylamino)uracil: step 1/2. In terms of biological role, catalyzes the formation of 6,7-dimethyl-8-ribityllumazine by condensation of 5-amino-6-(D-ribitylamino)uracil with 3,4-dihydroxy-2-butanone 4-phosphate. This is the penultimate step in the biosynthesis of riboflavin. This chain is 6,7-dimethyl-8-ribityllumazine synthase, found in Tolumonas auensis (strain DSM 9187 / NBRC 110442 / TA 4).